Consider the following 428-residue polypeptide: Adenylosuccinate synthetase (428 aa).

Residues 12–18 (GDEGKGK) and 40–42 (GHS) each bind GTP. Asp13 acts as the Proton acceptor in catalysis. Positions 13 and 40 each coordinate Mg(2+). IMP is bound by residues 13–16 (DEGK), 38–41 (NAGH), Thr128, Arg142, Gln223, Thr238, and Arg302. His41 (proton donor) is an active-site residue. 298–304 (VTTGRPR) contacts substrate. GTP-binding positions include Arg304, 330-332 (KLD), and 412-414 (GTG).

The protein belongs to the adenylosuccinate synthetase family. In terms of assembly, homodimer. Requires Mg(2+) as cofactor.

It is found in the cytoplasm. The enzyme catalyses IMP + L-aspartate + GTP = N(6)-(1,2-dicarboxyethyl)-AMP + GDP + phosphate + 2 H(+). It participates in purine metabolism; AMP biosynthesis via de novo pathway; AMP from IMP: step 1/2. Plays an important role in the de novo pathway of purine nucleotide biosynthesis. Catalyzes the first committed step in the biosynthesis of AMP from IMP. The polypeptide is Adenylosuccinate synthetase (Bifidobacterium longum (strain DJO10A)).